We begin with the raw amino-acid sequence, 572 residues long: MATTTMRMIISIILISTYVPHITLCQNITEEFYQSTCSAVSRGYLSALRTGWYTSVVTIELSKIQKNVCNGTDSKVKLIKQELERYNNAVAELQSLMQNEPTSSSRAKRGIPESIHYTRNSTKKFYGLMGKKRKRRFLGFLLGIGSAIASGVAVSKVLHLEGEVNKIKNALLSTNKAVVSLSNGVSVLTSKVLDLKNYIDKELLPKVNNHDCRISNIATVIEFQQKNNRLLEIAREFSVNAGITTPLSTYMLTNSELLSIINDMPITNDQKKLMSVCQIVRQQSYSIMSVLREVIAYVVQLPLYGVIDTPCWKLHTSPLCTTDNKEGSNICLTRTDRGWYCDNAGSVSFFPQAETCKVQSNRVFCDTMNSLTLPTDVNLCNTDIFNSKYDCKIMTSKTDISSSVITSIGAIVSCYGKTKCTASNKNRGIIKTFSNGCDYVSNKGVDTVSVGNTLYYVNKLEGKALYIKGEPIINYYNPLVFPSDEFDASIAQVNAKINQSLAFIRRSDELLHSVDVGKSTTNVVITTIIIVIVVVILMLITVGLLFYCKTRSTPIMLGKDQLSSINNLSFSK.

The first 25 residues, 1-25 (MATTTMRMIISIILISTYVPHITLC), serve as a signal peptide directing secretion. Residues 26–522 (QNITEEFYQS…SVDVGKSTTN (497 aa)) are Extracellular-facing. Residues N27 and N70 are each glycosylated (N-linked (GlcNAc...) asparagine; by host). 7 disulfide bridges follow: C37-C437, C69-C212, C311-C341, C320-C331, C356-C365, C380-C391, and C414-C420. Residues 76-96 (VKLIKQELERYNNAVAELQSL) adopt a coiled-coil conformation. The N-linked (GlcNAc...) asparagine; by host glycan is linked to N120. Residues 137–157 (FLGFLLGIGSAIASGVAVSKV) form a fusion peptide region. Residues 156-207 (KVLHLEGEVNKIKNALLSTNKAVVSLSNGVSVLTSKVLDLKNYIDKELLPKV) adopt a coiled-coil conformation. Residues 479-514 (LVFPSDEFDASIAQVNAKINQSLAFIRRSDELLHSV) are a coiled coil. The N-linked (GlcNAc...) asparagine; by host glycan is linked to N498. Residues 523 to 548 (VVITTIIIVIVVVILMLITVGLLFYC) form a helical membrane-spanning segment. C548 carries S-palmitoyl cysteine; by host lipidation. At 549 to 572 (KTRSTPIMLGKDQLSSINNLSFSK) the chain is on the cytoplasmic side.

This sequence belongs to the paramyxoviruses fusion glycoprotein family. In terms of assembly, homotrimer. Heterodimer with fusion protein F2; disulfide-linked. Part of a complex composed of F1, F2 and G glycoproteins. As a heterodimer with F2, interacts with host RHOA; this interaction facilitates virus-induced syncytium formation. Homotrimer. Heterodimer with fusion protein F1; disulfide-linked. Part of a complex composed of F1, F2 and G glycoproteins. As a heterodimer with F1, interacts with host RHOA; this interaction facilitates virus-induced syncytium formation. The F glycoprotein is synthesized as a F0 inactive precursor that is heavily N-glycosylated and processed at two sites by a host furin-like protease probably in the Golgi. The cleavage site between p27 and F1 may occur after endocytosis to yield the mature F1 and F2 proteins. Both cleavages are required for membrane fusion and p27 is released from the processed protein.

It localises to the host Golgi apparatus membrane. Its subcellular location is the virion membrane. The protein resides in the host cell membrane. In terms of biological role, inactive precursor that is cleaved at two sites by a furin-like protease to give rise to the mature F1 and F2 fusion glycoproteins. Its function is as follows. Class I viral fusion protein. Under the current model, the protein has at least 3 conformational states: pre-fusion native state, pre-hairpin intermediate state, and post-fusion hairpin state. During viral and plasma cell membrane fusion, the coiled coil regions assume a trimer-of-hairpins structure, positioning the fusion peptide in close proximity to the C-terminal region of the ectodomain. The formation of this structure appears to drive apposition and subsequent fusion of viral and cellular membranes leading to delivery of the nucleocapsid into the cytoplasm. This fusion is pH independent and occurs at the plasma or endosomal membrane. The trimer of F1-F2 (F protein) also facilitates the attachment and entry into the host cell. Later in infection, F protein expressed at the plasma membrane of infected cells can mediate fusion with adjacent cells to form syncytia, a cytopathic effect that could lead to tissue necrosis. Functionally, major determinant of the species specificity of RSV infection. The trimer of F1-F2 (F protein) also facilitates the attachment and entry into the host cell. Later in infection, F protein expressed at the plasma membrane of infected cells can mediate fusion with adjacent cells to form syncytia, a cytopathic effect that could lead to tissue necrosis. This Bovine respiratory syncytial virus (strain A51908) (BRS) protein is Fusion glycoprotein F0 (F).